The sequence spans 186 residues: Ribosome-recycling factor (186 aa).

The disordered stretch occupies residues 135-164 (DGMDDLKKAEKDGEIGQDESRAQSERVQKM).

This sequence belongs to the RRF family.

The protein resides in the cytoplasm. Responsible for the release of ribosomes from messenger RNA at the termination of protein biosynthesis. May increase the efficiency of translation by recycling ribosomes from one round of translation to another. The polypeptide is Ribosome-recycling factor (Rhizobium meliloti (strain 1021) (Ensifer meliloti)).